A 229-amino-acid chain; its full sequence is Heptaprenylglyceryl phosphate synthase (229 aa).

Residue K12 coordinates sn-glycerol 1-phosphate. Residues D14 and S40 each coordinate Mg(2+). Sn-glycerol 1-phosphate is bound by residues 159–164 (YLEYSG), G189, and 209–210 (GN).

The protein belongs to the GGGP/HepGP synthase family. Group I subfamily. In terms of assembly, homodimer. It depends on Mg(2+) as a cofactor.

It carries out the reaction sn-glycerol 1-phosphate + all-trans-heptaprenyl diphosphate = 3-heptaprenyl-sn-glycero-1-phosphate + diphosphate. It functions in the pathway membrane lipid metabolism; glycerophospholipid metabolism. In terms of biological role, prenyltransferase that catalyzes in vivo the transfer of the heptaprenyl moiety of heptaprenyl pyrophosphate (HepPP; 35 carbon atoms) to the C3 hydroxyl of sn-glycerol-1-phosphate (G1P), producing heptaprenylglyceryl phosphate (HepGP). This reaction is an ether-bond-formation step in the biosynthesis of archaea-type G1P-based membrane lipids found in Bacillales. The protein is Heptaprenylglyceryl phosphate synthase of Bacillus thuringiensis (strain Al Hakam).